The sequence spans 578 residues: Arginine--tRNA ligase (578 aa).

The short motif at 122 to 132 (PNVAKEMHVGH) is the 'HIGH' region element.

This sequence belongs to the class-I aminoacyl-tRNA synthetase family. As to quaternary structure, monomer.

Its subcellular location is the cytoplasm. The enzyme catalyses tRNA(Arg) + L-arginine + ATP = L-arginyl-tRNA(Arg) + AMP + diphosphate. In Shigella sonnei (strain Ss046), this protein is Arginine--tRNA ligase.